A 166-amino-acid polypeptide reads, in one-letter code: Ubiquitin-fold modifier-conjugating enzyme 1 (166 aa).

Cys-116 acts as the Glycyl thioester intermediate in catalysis.

This sequence belongs to the ubiquitin-conjugating enzyme family. UFC1 subfamily. As to quaternary structure, interacts with UBA5 (via C-terminus). Interacts with UFL1. Interacts with UFM1.

In terms of biological role, E2-like enzyme which specifically catalyzes the second step in ufmylation. Accepts the ubiquitin-like modifier UFM1 from the E1 enzyme UBA5 and forms an intermediate with UFM1 via a thioester linkage. Ufmylation is involved in various processes, such as ribosome recycling, response to DNA damage, interferon response or reticulophagy (also called ER-phagy). This Danio rerio (Zebrafish) protein is Ubiquitin-fold modifier-conjugating enzyme 1 (ufc1).